The following is a 352-amino-acid chain: Ion-translocating oxidoreductase complex subunit D (352 aa).

5 helical membrane passes run 20–40 (IMLL…WFFG), 42–62 (GTLV…ALVL), 78–109 (ALLT…VIIA), 123–143 (PAMI…TSWL), and 148–168 (IAVN…GHTA). Thr-187 bears the FMN phosphoryl threonine mark. Helical transmembrane passes span 214 to 234 (ILAG…GVWL), 242 to 262 (WHIP…GWLF), 267 to 287 (LAAP…FFIL), 301 to 321 (LIFG…GGYP), and 322 to 342 (DGVA…DYYT).

This sequence belongs to the NqrB/RnfD family. As to quaternary structure, the complex is composed of six subunits: RsxA, RsxB, RsxC, RsxD, RsxE and RsxG. FMN is required as a cofactor.

Its subcellular location is the cell inner membrane. Part of a membrane-bound complex that couples electron transfer with translocation of ions across the membrane. Required to maintain the reduced state of SoxR. This Escherichia coli O139:H28 (strain E24377A / ETEC) protein is Ion-translocating oxidoreductase complex subunit D.